The sequence spans 312 residues: DNA primase small subunit PriS (312 aa).

Residues D88, D90, and D215 contribute to the active site.

The protein belongs to the eukaryotic-type primase small subunit family. As to quaternary structure, heterodimer of a small subunit (PriS) and a large subunit (PriL). Mg(2+) serves as cofactor. The cofactor is Mn(2+).

Its function is as follows. Catalytic subunit of DNA primase, an RNA polymerase that catalyzes the synthesis of short RNA molecules used as primers for DNA polymerase during DNA replication. The small subunit contains the primase catalytic core and has DNA synthesis activity on its own. Binding to the large subunit stabilizes and modulates the activity, increasing the rate of DNA synthesis while decreasing the length of the DNA fragments, and conferring RNA synthesis capability. The DNA polymerase activity may enable DNA primase to also catalyze primer extension after primer synthesis. May also play a role in DNA repair. The chain is DNA primase small subunit PriS from Pyrobaculum islandicum (strain DSM 4184 / JCM 9189 / GEO3).